The sequence spans 363 residues: Sorting nexin-21 (363 aa).

Positions 1–11 (MASRLLHRLRH) are enriched in basic residues. Residues 1–99 (MASRLLHRLR…PPPDGQRSSQ (99 aa)) form a disordered region. Residues 12 to 28 (ALASDGPGEAAAGPEAE) show a composition bias toward low complexity. Positions 46-56 (SRLSGTLSFTS) are enriched in polar residues. Residues 57–71 (AEDDPDDEDEDDEAG) show a composition bias toward acidic residues. The region spanning 119 to 236 (QRLLFEVTSA…DFFVLPELRR (118 aa)) is the PX domain. A 1,2-diacyl-sn-glycero-3-phospho-(1D-myo-inositol-3-phosphate)-binding residues include R161, S163, K188, and R202.

The protein belongs to the sorting nexin family. Monomer.

It is found in the cytoplasmic vesicle membrane. Its subcellular location is the early endosome membrane. Binds to membranes enriched in phosphatidylinositol 3-phosphate (PtdIns(P3)) and phosphatidylinositol 4,5-bisphosphate. May be involved in several stages of intracellular trafficking. The polypeptide is Sorting nexin-21 (Mus musculus (Mouse)).